The sequence spans 213 residues: MKALKIALTKGRLEKDAVALLEKAGIDCSSMTDKKRKLIFHSSTQPISFILVKAVDVMTYVKHGVADIGIVGKDVLMEASKSHYEMLDLEIGKCQFCLASTPDFDPSSYRRKIIATKYPTVASKFFREKGEDVEIIKIEGSVEIAPVLGLADAIIDIVETGSTLKENGLLIYEKMYPISARLIVNKASLKQNKTQIFQLIDQLEQAIKEERIE.

The protein belongs to the ATP phosphoribosyltransferase family. Short subfamily. In terms of assembly, heteromultimer composed of HisG and HisZ subunits.

It localises to the cytoplasm. It carries out the reaction 1-(5-phospho-beta-D-ribosyl)-ATP + diphosphate = 5-phospho-alpha-D-ribose 1-diphosphate + ATP. It participates in amino-acid biosynthesis; L-histidine biosynthesis; L-histidine from 5-phospho-alpha-D-ribose 1-diphosphate: step 1/9. Catalyzes the condensation of ATP and 5-phosphoribose 1-diphosphate to form N'-(5'-phosphoribosyl)-ATP (PR-ATP). Has a crucial role in the pathway because the rate of histidine biosynthesis seems to be controlled primarily by regulation of HisG enzymatic activity. The polypeptide is ATP phosphoribosyltransferase (Listeria monocytogenes serotype 4a (strain HCC23)).